The following is a 255-amino-acid chain: MSCNNNGLAFFPENFSLQNHHQEEEDHPQLLQDFHGFLGKRSPMNNVQGFCNLDMNGDEEYSDDGSKMGEKKRRLNMEQLKALEKDFELGNKLESDRKLELARALGLQPRQIAIWFQNRRARSKTKQLEKDYDMLKRQFESLRDENEVLQTQNQKLQAQVMALKSREPIESINLNKETEGSCSDRSENISGDIRPPEIDSQFALGHPPTTTTMQFFQNSSSEQRMVKEENSISNMFCGIDDQSGFWPWLDQQQYN.

A DNA-binding region (homeobox) is located at residues 68–127 (MGEKKRRLNMEQLKALEKDFELGNKLESDRKLELARALGLQPRQIAIWFQNRRARSKTKQ). The segment at 128 to 163 (LEKDYDMLKRQFESLRDENEVLQTQNQKLQAQVMAL) is leucine-zipper.

The protein belongs to the HD-ZIP homeobox family. Class I subfamily. Expressed in young leaves, in the adaxial domain of leaf primordia and the rib meristem. Expressed in the styles of flowers and siliques.

The protein resides in the nucleus. Its function is as follows. Probable transcription factor. The protein is Homeobox-leucine zipper protein ATHB-23 (ATHB-23) of Arabidopsis thaliana (Mouse-ear cress).